The primary structure comprises 152 residues: UPF0225 protein YchJ (152 aa).

The protein belongs to the UPF0225 family.

The chain is UPF0225 protein YchJ from Escherichia coli O81 (strain ED1a).